The sequence spans 163 residues: 3-isopropylmalate dehydratase small subunit 2 (163 aa).

It belongs to the LeuD family. LeuD type 2 subfamily. Heterodimer of LeuC and LeuD.

It catalyses the reaction (2R,3S)-3-isopropylmalate = (2S)-2-isopropylmalate. It participates in amino-acid biosynthesis; L-leucine biosynthesis; L-leucine from 3-methyl-2-oxobutanoate: step 2/4. In terms of biological role, catalyzes the isomerization between 2-isopropylmalate and 3-isopropylmalate, via the formation of 2-isopropylmaleate. In Pyrococcus abyssi (strain GE5 / Orsay), this protein is 3-isopropylmalate dehydratase small subunit 2 (leuD2).